The primary structure comprises 274 residues: 16S rRNA (guanine(1405)-N(7))-methyltransferase (274 aa).

S-adenosyl-L-methionine is bound by residues phenylalanine 64, 102–104 (HMS), arginine 108, alanine 133, aspartate 156, 182–183 (DL), leucine 198, and glutamine 207.

It belongs to the methyltransferase superfamily. Aminoglycoside resistance family.

It carries out the reaction guanosine(1405) in 16S rRNA + S-adenosyl-L-methionine = N(7)-methylguanosine(1405) in 16S rRNA + S-adenosyl-L-homocysteine. Specifically methylates the N(7) position of guanine 1405 in 16S rRNA. Confers resistance to aminoglycosides. In Micromonospora rosea, this protein is 16S rRNA (guanine(1405)-N(7))-methyltransferase (grm).